Consider the following 118-residue polypeptide: Ribonuclease P protein component (118 aa).

Belongs to the RnpA family. In terms of assembly, consists of a catalytic RNA component (M1 or rnpB) and a protein subunit.

The catalysed reaction is Endonucleolytic cleavage of RNA, removing 5'-extranucleotides from tRNA precursor.. Its function is as follows. RNaseP catalyzes the removal of the 5'-leader sequence from pre-tRNA to produce the mature 5'-terminus. It can also cleave other RNA substrates such as 4.5S RNA. The protein component plays an auxiliary but essential role in vivo by binding to the 5'-leader sequence and broadening the substrate specificity of the ribozyme. This is Ribonuclease P protein component from Shewanella denitrificans (strain OS217 / ATCC BAA-1090 / DSM 15013).